A 2718-amino-acid chain; its full sequence is Zinc finger protein 40 (2718 aa).

3 disordered regions span residues 58–182, 210–256, and 335–373; these read HLKK…CISS, LSQK…AESQ, and GLTSPSSRSQVTPQNQQMDSASPLSISPANSTQSPPMPI. Serine 141 bears the Phosphoserine mark. Basic and acidic residues predominate over residues 142-158; sequence ELRRWRSEGADPAKFSD. 2 stretches are compositionally biased toward polar residues: residues 164–182 and 237–256; these read DSSSLSSKTRTDNSECISS and KNSSMDAPNQTSQELVAESQ. The C2H2-type 1 zinc finger occupies 406–428; it reads YICEYCNRACAKPSVLLKHIRSH. A Phosphothreonine modification is found at threonine 429. The C2H2-type 2 zinc-finger motif lies at 434-456; it reads YPCVTCGFSFKTKSNLYKHKKSH. Phosphoserine is present on residues serine 476, serine 479, serine 492, serine 495, serine 571, and serine 577. The segment at 484–511 is disordered; the sequence is SIHSDVEDSGESEEEGATDERQHDLGAM. Residues 490–500 show a composition bias toward acidic residues; the sequence is EDSGESEEEGA. The tract at residues 574 to 727 is disordered; it reads RTDSPKAMDP…TPSALPTGEK (154 aa). Residues 576–585 are compositionally biased toward basic and acidic residues; the sequence is DSPKAMDPKP. Positions 588 to 612 are enriched in polar residues; sequence SSAQKQKDLQVTNVQPLSANMSQGG. Residues 617–626 are compositionally biased toward basic and acidic residues; the sequence is ETNENSHQKG. Polar residues-rich tracts occupy residues 644 to 687 and 698 to 721; these read AQLQ…QTVS and STEQDSGRSNGPSAALVTTSTPSA. Phosphoserine is present on residues serine 670 and serine 681. The segment at 956 to 986 adopts a CCHC HIVEP-type zinc-finger fold; it reads GTMFECETCRNRYRKLENFENHKKFYCSELH. The tract at residues 1022–1062 is disordered; sequence WEQTPQIRKRRKMKSVGDDEELQQNESGTSPKSSEGLQFQN. A phosphoserine mark is found at serine 1036, serine 1051, serine 1091, serine 1158, serine 1161, and serine 1180. Residues 1045 to 1062 show a composition bias toward polar residues; it reads QNESGTSPKSSEGLQFQN. Residues 1138–1169 are disordered; sequence HTNSLSRPNSFDKPEPFERASPVSFQELNRTG. The segment covering 1160–1169 has biased composition (polar residues); it reads VSFQELNRTG. Composition is skewed to basic and acidic residues over residues 1202–1219 and 1246–1259; these read LRGELQESSRKSPSERHV and DLEAQCHDQEKSEK. Disordered stretches follow at residues 1202–1282, 1384–1414, and 1523–1548; these read LRGE…PKKK, RSKSFDCGSITPPQTTPLTELQPPSSPSRVG, and SHQSTQLSLQVSTQGSKPDKNSVLSG. Threonine 1268 carries the phosphothreonine modification. Composition is skewed to low complexity over residues 1394-1406 and 1523-1536; these read TPPQTTPLTELQP and SHQSTQLSLQVSTQ. Residues serine 1735, serine 1740, serine 1749, and serine 1753 each carry the phosphoserine modification. Residues 1871 to 1883 show a composition bias toward polar residues; it reads VRSSPAPSENTHI. Positions 1871–1911 are disordered; that stretch reads VRSSPAPSENTHISPLKCTDNNQERKSPGVKNQGDKVNIQE. A phosphoserine mark is found at serine 1884 and serine 2033. 2 C2H2-type zinc fingers span residues 2088 to 2110 and 2116 to 2140; these read YICEECGIRCKKPSMLKKHIRTH and YHCTYCNFSFKTKGNLTKHMKSKAH. Disordered regions lie at residues 2155–2228, 2265–2303, 2327–2381, and 2572–2718; these read DEQD…PVST, SDYNRKTLSPGKARQRAARDENDTIPSVDTSRSPCHQMS, SPSS…THLF, and PASQ…VIAT. Positions 2164 to 2175 are enriched in basic and acidic residues; sequence EKQRFSYERSGY. The span at 2176-2198 shows a compositional bias: acidic residues; that stretch reads DLEESDGPDEDDNENEDDDEDSQ. Polar residues-rich tracts occupy residues 2199–2226 and 2288–2300; these read AESVLSATPSVTASPQHLPSRSSLQDPV and TIPSVDTSRSPCH. Phosphoserine is present on residues serine 2327 and serine 2599. Positions 2573 to 2608 are enriched in polar residues; it reads ASQSKACETQPKQTSVASANQVSRTESPQGLPTVQR. A compositionally biased stretch (basic and acidic residues) spans 2623-2637; sequence DHARLDGLSKMDTEK. The span at 2651-2663 shows a compositional bias: polar residues; that stretch reads TSIQGQPASTSQP. Phosphoserine occurs at positions 2669 and 2682.

Interacts with UTP4.

It is found in the nucleus. The protein resides in the cytoplasm. In terms of biological role, this protein specifically binds to the DNA sequence 5'-GGGACTTTCC-3' which is found in the enhancer elements of numerous viral promoters such as those of SV40, CMV, or HIV-1. In addition, related sequences are found in the enhancer elements of a number of cellular promoters, including those of the class I MHC, interleukin-2 receptor, and interferon-beta genes. It may act in T-cell activation. Involved in activating HIV-1 gene expression. Isoform 2 and isoform 3 also bind to the IPCS (IRF1 and p53 common sequence) DNA sequence in the promoter region of interferon regulatory factor 1 and p53 genes and are involved in transcription regulation of these genes. Isoform 2 does not activate HIV-1 gene expression. Isoform 2 and isoform 3 may be involved in apoptosis. The chain is Zinc finger protein 40 (HIVEP1) from Homo sapiens (Human).